The chain runs to 101 residues: MAKKGMINRELKREKTVAKYAVKRAELKATIANVNASDEERFEAMLKLQALPRNASPVRLRNRCGLTGRPHGYFRKFGLSRNKLRDTVMQGDVPGVVKASW.

This sequence belongs to the universal ribosomal protein uS14 family. In terms of assembly, part of the 30S ribosomal subunit. Contacts proteins S3 and S10.

Functionally, binds 16S rRNA, required for the assembly of 30S particles and may also be responsible for determining the conformation of the 16S rRNA at the A site. In Acinetobacter baumannii (strain SDF), this protein is Small ribosomal subunit protein uS14.